The sequence spans 529 residues: MKKIMLVFITLILISLPIAQQTEAKDASAFNKENSISSMAPPASPPASPKTPIEKKHADEIDKYIQGLDYNKNNVLVYHGDAVTNVPPRKGYKDGNEYIVVEKKKKSINQNNADIQVVNAISSLTYPGALVKANSELVENQPDVLPVKRDSLTLSIDLPGMTNQDNKIVVKNATKSNVNNAVNTLVERWNEKYAQAYPNVSAKIDYDDEMAYSESQLIAKFGTAFKAVNNSLNVNFGAISEGKMQEEVISFKQIYYNVNVNEPTRPSRFFGKAVTKEQLQALGVNAENPPAYISSVAYGRQVYLKLSTNSHSTKVKAAFDAAVSGKSVSGDVELTNIIKNSSFKAVIYGGSAKDEVQIIDGNLGDLRDILKKGATFNRETPGVPIAYTTNFLKDNELAVIKNNSEYIETTSKAYTDGKINIDHSGGYVAQFNISWDEINYDPEGNEIVQHKNWSENNKSKLAHFTSSIYLPGNARNINVYAKECTGLAWEWWRTVIDDRNLPLVKNRNISIWGTTLYPKYSNSVDNPIE.

Residues 1–24 (MKKIMLVFITLILISLPIAQQTEA) form the signal peptide. The segment at 35–54 (SISSMAPPASPPASPKTPIE) is disordered. Transmembrane regions (beta stranded) follow at residues 214–227 (ESQL…AFKA), 234–243 (VNFGAISEGK), 312–321 (STKVKAAFDA), and 329–341 (SGDV…IKNS). Positions 483-493 (ECTGLAWEWWR) match the Conserved undecapeptide motif. The short motif at 515-516 (TL) is the Cholesterol binding element.

This sequence belongs to the cholesterol-dependent cytolysin family. Homooligomeric pore complex of 35 to 50 subunits; when inserted in the host membrane.

The protein localises to the secreted. The protein resides in the host membrane. It localises to the host cell membrane. With respect to regulation, activity of listeriolysin O is regulated on multiple levels. It should be high in the phagosome, thereby allowing escape of the bacteria from the phagosomal compartment. Then, once inside the host cytosol, the activity must be controlled to prevent lysis of the host plasma membrane and loss of the intracellular environment. A cholesterol-dependent toxin that causes cytolysis by forming pores in cholesterol containing host membranes. After binding to target membranes, the protein undergoes a major conformation change, leading to its insertion in the host membrane and formation of an oligomeric pore complex. Cholesterol is required for binding to host membranes, membrane insertion and pore formation; cholesterol binding is mediated by a Thr-Leu pair in the C-terminus. Acts as a major virulence factor required for the escape of bacteria from phagosomal vacuoles and entry into the host cytosol. Can be reversibly inactivated by oxidation. The protein is Listeriolysin O (hly) of Listeria monocytogenes serotype 4a (strain HCC23).